The chain runs to 126 residues: Large ribosomal subunit protein bL12 (126 aa).

This sequence belongs to the bacterial ribosomal protein bL12 family. In terms of assembly, homodimer. Part of the ribosomal stalk of the 50S ribosomal subunit. Forms a multimeric L10(L12)X complex, where L10 forms an elongated spine to which 2 to 4 L12 dimers bind in a sequential fashion. Binds GTP-bound translation factors.

Functionally, forms part of the ribosomal stalk which helps the ribosome interact with GTP-bound translation factors. Is thus essential for accurate translation. The protein is Large ribosomal subunit protein bL12 of Blochmanniella floridana.